We begin with the raw amino-acid sequence, 181 residues long: Adenylyl-sulfate kinase (181 aa).

Gly-12–Thr-19 provides a ligand contact to ATP. Residue Ser-86 is the Phosphoserine intermediate of the active site.

Belongs to the APS kinase family.

It catalyses the reaction adenosine 5'-phosphosulfate + ATP = 3'-phosphoadenylyl sulfate + ADP + H(+). It functions in the pathway sulfur metabolism; hydrogen sulfide biosynthesis; sulfite from sulfate: step 2/3. Its function is as follows. Catalyzes the synthesis of activated sulfate. The protein is Adenylyl-sulfate kinase of Rippkaea orientalis (strain PCC 8801 / RF-1) (Cyanothece sp. (strain PCC 8801)).